A 2813-amino-acid polypeptide reads, in one-letter code: von Willebrand factor (2813 aa).

A signal peptide spans 1-22 (MSPTRLVRVLLALALILPGKLC). Positions 23–763 (TKGTVGRSSM…SSPRSHRSKR (741 aa)) are excised as a propeptide. The 169-residue stretch at 33–201 (ARCSLFGGDF…ALSSGEQRCK (169 aa)) folds into the VWFD 1 domain. 2 disulfide bridges follow: cysteine 35–cysteine 162 and cysteine 57–cysteine 200. N-linked (GlcNAc...) asparagine glycosylation is found at asparagine 99, asparagine 156, and asparagine 211. One can recognise a TIL 1 domain in the interval 295-348 (CPAGMEYKECVSPCTRTCQSLHVKEVCQEQCVDGCSCPEGQLLDEGHCVGSAEC). In terms of domain architecture, VWFD 2 spans 386 to 560 (GECLVTGQSH…NAWKLLGACE (175 aa)). 3 disulfide bridges follow: cysteine 388-cysteine 524, cysteine 410-cysteine 559, and cysteine 432-cysteine 440. The short motif at 531–533 (RGD) is the Cell attachment site element. TIL domains are found at residues 652-707 (CPQG…KAQC) and 776-827 (CPAD…LERC). N-linked (GlcNAc...) asparagine glycosylation occurs at asparagine 666. Positions 698-700 (RGD) match the Cell attachment site motif. The tract at residues 764 to 787 (SLSCRPPMVKLVCPADNPRAEGLE) is amino-terminal. Intrachain disulfides connect cysteine 767/cysteine 808, cysteine 776/cysteine 804, and cysteine 810/cysteine 821. An E1 region spans residues 788-833 (CAKTCQNYDLQCMSTGCVSGCLCPQGMVRHENRCVALERCPCFHQG). The interval 826–853 (RCPCFHQGQEYAPGETVKIDCNTCVCRD) is CX. A glycan (N-linked (GlcNAc...) asparagine) is linked at asparagine 857. The region spanning 865–1032 (ATCSAIGMAH…NSWKVNPQCA (168 aa)) is the VWFD 3 domain. 11 disulfide bridges follow: cysteine 867–cysteine 996, cysteine 889–cysteine 1031, cysteine 898–cysteine 993, cysteine 914–cysteine 921, cysteine 1060–cysteine 1084, cysteine 1071–cysteine 1111, cysteine 1089–cysteine 1091, cysteine 1126–cysteine 1130, cysteine 1149–cysteine 1169, cysteine 1153–cysteine 1165, and cysteine 1196–cysteine 1199. The TIL 4 domain maps to 1146 to 1196 (YNSCAPACPITCQHPEPLACPVQCVEGCHAHCPPGKILDELLQTCIDPEDC). An N-linked (GlcNAc...) asparagine glycan is attached at asparagine 1231. Intrachain disulfides connect cysteine 1234/cysteine 1237 and cysteine 1272/cysteine 1458. VWFA domains lie at 1277 to 1453 (DLVF…RDEI) and 1498 to 1665 (DVVF…PDLV). Residues asparagine 1515 and asparagine 1574 are each glycosylated (N-linked (GlcNAc...) asparagine). 8 disulfide bridges follow: cysteine 1669–cysteine 1670, cysteine 1686–cysteine 1872, cysteine 1879–cysteine 1904, cysteine 1899–cysteine 1940, cysteine 1927–cysteine 2088, cysteine 1950–cysteine 2085, cysteine 1972–cysteine 2123, and cysteine 1993–cysteine 2001. The VWFA 3 domain maps to 1691–1871 (DVVLLLDGSS…TLGNSFFHKL (181 aa)). The region spanning 1948-2124 (CVCMGSSTRH…TVQQLGKTCQ (177 aa)) is the VWFD 4 domain. Residues 2216 to 2261 (CPRLCEGNTSSCGDQPSEGCFCPPNQVMLEGSCVPEEACTQCISED) are E2. Asparagine 2223, asparagine 2290, asparagine 2357, and asparagine 2400 each carry an N-linked (GlcNAc...) asparagine glycan. A VWFC 1 domain is found at 2255–2328 (TQCISEDGVR…CCPEYECVCD (74 aa)). In terms of domain architecture, VWFC 2 spans 2429–2495 (KVCVHRGTIY…HEGECCGRCL (67 aa)). A Cell attachment site motif is present at residues 2507-2509 (RGD). Asparagine 2546 and asparagine 2585 each carry an N-linked (GlcNAc...) asparagine glycan. The VWFC 3 domain occupies 2580-2645 (EACLLNGTII…NQGECCGRCL (66 aa)). Cystine bridges form between cysteine 2724–cysteine 2774, cysteine 2739–cysteine 2788, cysteine 2750–cysteine 2804, and cysteine 2754–cysteine 2806. The region spanning 2724–2812 (CKDIIAKLQR…QCRCSPRKCS (89 aa)) is the CTCK domain. Asparagine 2790 carries N-linked (GlcNAc...) asparagine glycosylation.

Multimeric. Interacts with F8. Post-translationally, all cysteine residues are involved in intrachain or interchain disulfide bonds. In terms of processing, N- and O-glycosylated. In terms of tissue distribution, plasma.

The protein resides in the secreted. Its subcellular location is the extracellular space. The protein localises to the extracellular matrix. Functionally, important in the maintenance of hemostasis, it promotes adhesion of platelets to the sites of vascular injury by forming a molecular bridge between sub-endothelial collagen matrix and platelet-surface receptor complex, glycoprotein Ibalpha/IX/V. Also acts as a chaperone for coagulation factor VIII, delivering it to the site of injury, stabilizing its heterodimeric structure and protecting it from premature clearance from plasma. This chain is von Willebrand factor (VWF), found in Canis lupus familiaris (Dog).